Reading from the N-terminus, the 152-residue chain is MVKAVAVLTGSEGVQGTVFFAQEGEGPTTITGSLSGLKPGLHGFHVHALGDTTNGCMSTGPHFNPAGKEHGAPEDGNRHAGDLGNVTVGEDGTVNFTVTDSQIPLTGLNSVVGRAVVVHADSDDLGKGGHELSKTTGNAGGRLACGVIGLQA.

Cu cation is bound by residues histidine 45, histidine 47, and histidine 62. Cysteine 56 and cysteine 145 are disulfide-bonded. Residues histidine 62, histidine 70, histidine 79, and aspartate 82 each coordinate Zn(2+). Residue histidine 119 coordinates Cu cation.

Belongs to the Cu-Zn superoxide dismutase family. As to quaternary structure, homodimer. It depends on Cu cation as a cofactor. Requires Zn(2+) as cofactor.

Its subcellular location is the cytoplasm. The enzyme catalyses 2 superoxide + 2 H(+) = H2O2 + O2. Destroys radicals which are normally produced within the cells and which are toxic to biological systems. The protein is Superoxide dismutase [Cu-Zn] (SODCC) of Zantedeschia aethiopica (White calla lily).